Reading from the N-terminus, the 432-residue chain is Glutamate-1-semialdehyde 2,1-aminomutase 1 (432 aa).

An N6-(pyridoxal phosphate)lysine modification is found at K268.

The protein belongs to the class-III pyridoxal-phosphate-dependent aminotransferase family. HemL subfamily. As to quaternary structure, homodimer. The cofactor is pyridoxal 5'-phosphate.

Its subcellular location is the cytoplasm. The catalysed reaction is (S)-4-amino-5-oxopentanoate = 5-aminolevulinate. The protein operates within porphyrin-containing compound metabolism; protoporphyrin-IX biosynthesis; 5-aminolevulinate from L-glutamyl-tRNA(Glu): step 2/2. In Bacillus cereus (strain B4264), this protein is Glutamate-1-semialdehyde 2,1-aminomutase 1.